Consider the following 130-residue polypeptide: NADH-quinone oxidoreductase subunit A (130 aa).

3 consecutive transmembrane segments (helical) span residues 15–35 (AIHVALSAGIVAAIIVVATII), 67–87 (FLIAALFVIFDMEAAILFAWA), and 95–115 (WVGLIEAAIFIGVLLLALIYL).

The protein belongs to the complex I subunit 3 family. As to quaternary structure, NDH-1 is composed of 14 different subunits. Subunits NuoA, H, J, K, L, M, N constitute the membrane sector of the complex.

Its subcellular location is the cell inner membrane. The enzyme catalyses a quinone + NADH + 5 H(+)(in) = a quinol + NAD(+) + 4 H(+)(out). Its function is as follows. NDH-1 shuttles electrons from NADH, via FMN and iron-sulfur (Fe-S) centers, to quinones in the respiratory chain. The immediate electron acceptor for the enzyme in this species is believed to be ubiquinone. Couples the redox reaction to proton translocation (for every two electrons transferred, four hydrogen ions are translocated across the cytoplasmic membrane), and thus conserves the redox energy in a proton gradient. This chain is NADH-quinone oxidoreductase subunit A, found in Rhodopseudomonas palustris (strain BisA53).